A 336-amino-acid polypeptide reads, in one-letter code: Serpentine receptor class delta-51 (336 aa).

The next 7 membrane-spanning stretches (helical) occupy residues 14-34 (VYYS…LFIM), 48-68 (YLFN…FAQC), 93-113 (CFVT…SILL), 133-153 (ATTF…QLLT), 188-208 (AAII…LIAF), 237-257 (GLLI…SYFL), and 275-295 (IFGS…VLPY).

Belongs to the nematode receptor-like protein srd family.

It is found in the membrane. The chain is Serpentine receptor class delta-51 (srd-51) from Caenorhabditis elegans.